The following is a 485-amino-acid chain: MTTATNRQDFKVADLSLAPFGRKEITLAEHEMPGLMSIRKEFAAAQPLAGARITGSLHMTVQTAVLIETLVALGAEVRWASCNIFSTQDHAAAAIAVGPNGTPEAPAGVPVFAWKGETLEEYWWCTEQALTWPNTPTGGPNMILDDGGDATLLVHKGVEFEKAGAAPDPSTADSEEYAHILTLLNRTLGEAPQKWTQLASEIRGVTEETTTGVHRLYEMHRDGSLLFPAINVNDAVTKSKFDNKYGCRHSLIDGINRATDVLIGGKTAVVFGYGDVGKGCAESLRGQGARVIITEIDPICALQAAMDGYQVATLDDVVEQADIFVTTTGNKDIIMAKDMARMKHQAIVGNIGHFDNEIDMAGLAKIDGIVKDEVKPQVHTWTFPDGKVLIVLSEGRLLNLGNATGHPSFVMSNSFADQTLAQIELFTKPEDYPTDVYVLPKHLDEKVARLHLDALGVKLTTLRPEQAAYIGVEVEGPYKPDHYRY.

The substrate site is built by T60, D146, and E208. 209–211 lines the NAD(+) pocket; that stretch reads TTT. Positions 238 and 242 each coordinate substrate. NAD(+) is bound by residues N243, 272-277, E295, N330, 351-353, and N399; these read GYGDVG and IGH.

Belongs to the adenosylhomocysteinase family. NAD(+) serves as cofactor.

The protein localises to the cytoplasm. It catalyses the reaction S-adenosyl-L-homocysteine + H2O = L-homocysteine + adenosine. It functions in the pathway amino-acid biosynthesis; L-homocysteine biosynthesis; L-homocysteine from S-adenosyl-L-homocysteine: step 1/1. Its function is as follows. May play a key role in the regulation of the intracellular concentration of adenosylhomocysteine. The polypeptide is Adenosylhomocysteinase (Streptomyces griseus subsp. griseus (strain JCM 4626 / CBS 651.72 / NBRC 13350 / KCC S-0626 / ISP 5235)).